Reading from the N-terminus, the 212-residue chain is Kynurenine formamidase (212 aa).

Substrate is bound at residue tryptophan 18. Positions 48, 52, and 54 each coordinate Zn(2+). The active-site Proton donor/acceptor is histidine 58. Zn(2+) is bound by residues histidine 160 and glutamate 172.

This sequence belongs to the Cyclase 1 superfamily. KynB family. As to quaternary structure, homodimer. It depends on Zn(2+) as a cofactor.

It carries out the reaction N-formyl-L-kynurenine + H2O = L-kynurenine + formate + H(+). Its pathway is amino-acid degradation; L-tryptophan degradation via kynurenine pathway; L-kynurenine from L-tryptophan: step 2/2. Its function is as follows. Catalyzes the hydrolysis of N-formyl-L-kynurenine to L-kynurenine, the second step in the kynurenine pathway of tryptophan degradation. The polypeptide is Kynurenine formamidase (Paraburkholderia phytofirmans (strain DSM 17436 / LMG 22146 / PsJN) (Burkholderia phytofirmans)).